Reading from the N-terminus, the 262-residue chain is Octanoyltransferase (262 aa).

The BPL/LPL catalytic domain maps to 60 to 248; it reads GTADELVWLV…AFEMVFGPTR (189 aa). Residues 99-106, 179-181, and 192-194 contribute to the substrate site; these read RGGEYTYH, AIG, and GLS. The active-site Acyl-thioester intermediate is the C210.

It belongs to the LipB family.

It localises to the cytoplasm. The enzyme catalyses octanoyl-[ACP] + L-lysyl-[protein] = N(6)-octanoyl-L-lysyl-[protein] + holo-[ACP] + H(+). It functions in the pathway protein modification; protein lipoylation via endogenous pathway; protein N(6)-(lipoyl)lysine from octanoyl-[acyl-carrier-protein]: step 1/2. Its function is as follows. Catalyzes the transfer of endogenously produced octanoic acid from octanoyl-acyl-carrier-protein onto the lipoyl domains of lipoate-dependent enzymes. Lipoyl-ACP can also act as a substrate although octanoyl-ACP is likely to be the physiological substrate. The protein is Octanoyltransferase of Sinorhizobium medicae (strain WSM419) (Ensifer medicae).